A 248-amino-acid chain; its full sequence is Protein STPG4 (248 aa).

In terms of assembly, interacts with histone H3. Interacts with histone H4.

The protein localises to the cytoplasm. The protein resides in the nucleus. Functionally, maternal factor that plays a role in epigenetic chromatin reprogramming during early development of the zygote. Involved in the regulation of gametic DNA demethylation by inducing the conversion of the modified genomic base 5-methylcytosine (5mC) into 5-hydroxymethylcytosine (5hmC). This Homo sapiens (Human) protein is Protein STPG4.